A 370-amino-acid chain; its full sequence is Holliday junction branch migration complex subunit RuvB (370 aa).

Residues 1–182 (MDERMMTSAK…FGVIHRLEYY (182 aa)) are large ATPase domain (RuvB-L). Residues Leu21, Arg22, Gly63, Lys66, Thr67, Thr68, 129 to 131 (EDF), Arg172, Tyr182, and Arg219 each bind ATP. Residue Thr67 coordinates Mg(2+). A small ATPAse domain (RuvB-S) region spans residues 183-253 (RPDELEFIIL…VAREALRRLE (71 aa)). The tract at residues 256–370 (PRGLDTTDQR…AEQAALSFDE (115 aa)) is head domain (RuvB-H). DNA-binding residues include Arg311 and Arg316.

It belongs to the RuvB family. Homohexamer. Forms an RuvA(8)-RuvB(12)-Holliday junction (HJ) complex. HJ DNA is sandwiched between 2 RuvA tetramers; dsDNA enters through RuvA and exits via RuvB. An RuvB hexamer assembles on each DNA strand where it exits the tetramer. Each RuvB hexamer is contacted by two RuvA subunits (via domain III) on 2 adjacent RuvB subunits; this complex drives branch migration. In the full resolvosome a probable DNA-RuvA(4)-RuvB(12)-RuvC(2) complex forms which resolves the HJ.

Its subcellular location is the cytoplasm. The catalysed reaction is ATP + H2O = ADP + phosphate + H(+). Its function is as follows. The RuvA-RuvB-RuvC complex processes Holliday junction (HJ) DNA during genetic recombination and DNA repair, while the RuvA-RuvB complex plays an important role in the rescue of blocked DNA replication forks via replication fork reversal (RFR). RuvA specifically binds to HJ cruciform DNA, conferring on it an open structure. The RuvB hexamer acts as an ATP-dependent pump, pulling dsDNA into and through the RuvAB complex. RuvB forms 2 homohexamers on either side of HJ DNA bound by 1 or 2 RuvA tetramers; 4 subunits per hexamer contact DNA at a time. Coordinated motions by a converter formed by DNA-disengaged RuvB subunits stimulates ATP hydrolysis and nucleotide exchange. Immobilization of the converter enables RuvB to convert the ATP-contained energy into a lever motion, pulling 2 nucleotides of DNA out of the RuvA tetramer per ATP hydrolyzed, thus driving DNA branch migration. The RuvB motors rotate together with the DNA substrate, which together with the progressing nucleotide cycle form the mechanistic basis for DNA recombination by continuous HJ branch migration. Branch migration allows RuvC to scan DNA until it finds its consensus sequence, where it cleaves and resolves cruciform DNA. The polypeptide is Holliday junction branch migration complex subunit RuvB (Heliobacterium modesticaldum (strain ATCC 51547 / Ice1)).